Here is a 663-residue protein sequence, read N- to C-terminus: DNA ligase (663 aa).

Residues 31 to 35 (DSEYD), 80 to 81 (SL), and Glu109 contribute to the NAD(+) site. Lys111 (N6-AMP-lysine intermediate) is an active-site residue. Residues Arg132, Glu166, Lys282, and Lys306 each coordinate NAD(+). Zn(2+) contacts are provided by Cys400, Cys403, Cys418, and Cys423. Residues 585 to 663 (ELHPVFGEKT…EQMMVDALRN (79 aa)) form the BRCT domain.

This sequence belongs to the NAD-dependent DNA ligase family. LigA subfamily. It depends on Mg(2+) as a cofactor. Requires Mn(2+) as cofactor.

The enzyme catalyses NAD(+) + (deoxyribonucleotide)n-3'-hydroxyl + 5'-phospho-(deoxyribonucleotide)m = (deoxyribonucleotide)n+m + AMP + beta-nicotinamide D-nucleotide.. DNA ligase that catalyzes the formation of phosphodiester linkages between 5'-phosphoryl and 3'-hydroxyl groups in double-stranded DNA using NAD as a coenzyme and as the energy source for the reaction. It is essential for DNA replication and repair of damaged DNA. In Macrococcus caseolyticus (strain JCSC5402) (Macrococcoides caseolyticum), this protein is DNA ligase.